The chain runs to 238 residues: D/L-lactic acid transporter (238 aa).

2 helical membrane passes run 2-22 (VHQLIAEFMGTALMIIFGVGV) and 39-59 (IFAITTWGFGISVALFIFGNV). The short motif at 62-64 (NPA) is the NPA 1 element. 3 helical membrane-spanning segments follow: residues 80–100 (FIPYSVAEVLGGVVGSVIVWI), 135–155 (FFVELFDTFIFISGILAISEI), and 158–178 (PGIVPIGVGLLVWAIGMGLGG). Positions 185–187 (NLA) match the NPA 2 motif. The chain crosses the membrane as a helical span at residues 211–231 (YGIIVPGIAPFVGAAIAAWFM).

The protein belongs to the MIP/aquaporin (TC 1.A.8) family.

It localises to the cell membrane. Its function is as follows. Transporter that facilitates the transmembrane diffusion of D/L-lactic acid. Is involved in the cellular racemization of lactate and lactate metabolism. The transported molecule is indeed lactic acid and not the lactate anion, in agreement with the assumption that, with very few exceptions, MIPs (major intrinsic proteins) only facilitate the transport of uncharged solutes. Also facilitates urea and H(2)O(2) diffusion across membranes, but is not permeable to water, glycerol and dihydroxyacetone. In Lactiplantibacillus plantarum (strain ATCC BAA-793 / NCIMB 8826 / WCFS1) (Lactobacillus plantarum), this protein is D/L-lactic acid transporter.